The following is a 73-amino-acid chain: uncharacterized protein (73 aa).

An N-terminal signal peptide occupies residues 1 to 21 (MTLFSSLSSLSTGSLKSSVSS). Low complexity predominate over residues 1–38 (MTLFSSLSSLSTGSLKSSVSSIETGSSSGSFGSNETSG). The disordered stretch occupies residues 1-43 (MTLFSSLSSLSTGSLKSSVSSIETGSSSGSFGSNETSGWGSHH). Residue Asn-34 is glycosylated (N-linked (GlcNAc...) asparagine).

The protein resides in the secreted. This is an uncharacterized protein from Dictyostelium discoideum (Social amoeba).